Here is a 312-residue protein sequence, read N- to C-terminus: Heterotepalin-4 (312 aa).

Residues 1–22 form the signal peptide; that stretch reads MKSMLVVTISVWLILAPTSTWA. 2 disulfide bridges follow: C56–C280 and C107–C128. Residue E197 is part of the active site. The propeptide occupies 284–312; that stretch reads YNQNAMFPQLIMSTYYNYMANLGDLFEEF.

It carries out the reaction Endohydrolysis of the N-glycosidic bond at one specific adenosine on the 28S rRNA.. Its function is as follows. Inhibits protein synthesis in vitro. The polypeptide is Heterotepalin-4 (Phytolacca heterotepala (Mexican pokeweed)).